The chain runs to 231 residues: 7-cyano-7-deazaguanine synthase (231 aa).

8–18 (FSGGQDSTTCL) serves as a coordination point for ATP. Residues cysteine 188, cysteine 197, cysteine 200, and cysteine 203 each coordinate Zn(2+).

This sequence belongs to the QueC family. It depends on Zn(2+) as a cofactor.

The catalysed reaction is 7-carboxy-7-deazaguanine + NH4(+) + ATP = 7-cyano-7-deazaguanine + ADP + phosphate + H2O + H(+). Its pathway is purine metabolism; 7-cyano-7-deazaguanine biosynthesis. In terms of biological role, catalyzes the ATP-dependent conversion of 7-carboxy-7-deazaguanine (CDG) to 7-cyano-7-deazaguanine (preQ(0)). This Pectobacterium carotovorum subsp. carotovorum (strain PC1) protein is 7-cyano-7-deazaguanine synthase.